Consider the following 362-residue polypeptide: Oxygen-dependent coproporphyrinogen-III oxidase (362 aa).

The tract at residues 12-31 (RQENDQSTPQLELPPTDSRD) is disordered. Ser-118 contributes to the substrate binding site. A divalent metal cation contacts are provided by His-122 and His-132. His-132 acts as the Proton donor in catalysis. 134–136 (NYR) contacts substrate. The a divalent metal cation site is built by His-166 and His-196. The tract at residues 286-321 (YVEFNLVWDRGTIFGLQTNGRTESILMSLPPLVRWE) is important for dimerization.

This sequence belongs to the aerobic coproporphyrinogen-III oxidase family. Homodimer. A divalent metal cation is required as a cofactor.

The protein resides in the cytoplasm. It catalyses the reaction coproporphyrinogen III + O2 + 2 H(+) = protoporphyrinogen IX + 2 CO2 + 2 H2O. It functions in the pathway porphyrin-containing compound metabolism; protoporphyrin-IX biosynthesis; protoporphyrinogen-IX from coproporphyrinogen-III (O2 route): step 1/1. Its function is as follows. Involved in the heme and chlorophyll biosynthesis. Catalyzes the aerobic oxidative decarboxylation of propionate groups of rings A and B of coproporphyrinogen-III to yield the vinyl groups in protoporphyrinogen-IX. The chain is Oxygen-dependent coproporphyrinogen-III oxidase from Synechococcus sp. (strain CC9902).